A 469-amino-acid chain; its full sequence is MAEEREPELYLKWKHCETPGVKTLCNLKHCETPGVKTLCNLKKLLNRLQKDHREDVYLYISGHLNPNKLYQPPETILQHWPNAHRPKGERASEVGEPPAGKVARMKEALAHFTIHTALVPSEAQDTPLFRYLNPQASLSHTSEEDFLPVEAVREGKEEKKGGPPGRGPPGWRRREELRLPDLKVLCYQEAGSRGTRDRHHYVSSYLAGATSADRYRMFLRFQKEVLAKQDLLKNDFTGSKAAAGHERKLQQELQKICTCSPQQFNRLHVFGKVFEDICNSSLIFGDLLKKVKDEYELYMATLLESQPAAQYEALLAQLKALGQRPVKTADMDLAREELRMLVTATKAALEQNDRLRSELEMEVALLQSAKERSESSEKHIIDENRLTLTEKVEKKRCEILSKWDEIQALEKEIKTTLVHTGISDITENRIKSIEHEAIQLETENMILKKKIKGPLEIYQGICKIRGNRR.

Positions 152 to 161 are enriched in basic and acidic residues; that stretch reads VREGKEEKKG. The segment at 152 to 174 is disordered; that stretch reads VREGKEEKKGGPPGRGPPGWRRR. Coiled coils occupy residues 346–375 and 423–453; these read KAAL…RSES and SDIT…KIKG.

This is an uncharacterized protein from Homo sapiens (Human).